The primary structure comprises 228 residues: Cytochrome c oxidase subunit 2 (228 aa).

At 1 to 26 (MPNWGQVMFQDAASSVMLQLVSFHDH) the chain is on the mitochondrial intermembrane side. Residues 27–47 (ALLVLTLVLTVVGYALLALML) traverse the membrane as a helical segment. The Mitochondrial matrix portion of the chain corresponds to 48-60 (NKQVNRYIMEAQT). The chain crosses the membrane as a helical span at residues 61–81 (VETIWTILPALILLVLALPSL). The Mitochondrial intermembrane portion of the chain corresponds to 82–228 (RILYITDEVS…FMSWVSNFKP (147 aa)). Histidine 161, cysteine 196, glutamate 198, cysteine 200, histidine 204, and methionine 207 together coordinate Cu cation. Glutamate 198 is a binding site for Mg(2+).

This sequence belongs to the cytochrome c oxidase subunit 2 family. Component of the cytochrome c oxidase (complex IV, CIV), a multisubunit enzyme composed of a catalytic core of 3 subunits and several supernumerary subunits. The complex exists as a monomer or a dimer and forms supercomplexes (SCs) in the inner mitochondrial membrane with ubiquinol-cytochrome c oxidoreductase (cytochrome b-c1 complex, complex III, CIII). Cu cation serves as cofactor.

The protein localises to the mitochondrion inner membrane. The catalysed reaction is 4 Fe(II)-[cytochrome c] + O2 + 8 H(+)(in) = 4 Fe(III)-[cytochrome c] + 2 H2O + 4 H(+)(out). In terms of biological role, component of the cytochrome c oxidase, the last enzyme in the mitochondrial electron transport chain which drives oxidative phosphorylation. The respiratory chain contains 3 multisubunit complexes succinate dehydrogenase (complex II, CII), ubiquinol-cytochrome c oxidoreductase (cytochrome b-c1 complex, complex III, CIII) and cytochrome c oxidase (complex IV, CIV), that cooperate to transfer electrons derived from NADH and succinate to molecular oxygen, creating an electrochemical gradient over the inner membrane that drives transmembrane transport and the ATP synthase. Cytochrome c oxidase is the component of the respiratory chain that catalyzes the reduction of oxygen to water. Electrons originating from reduced cytochrome c in the intermembrane space (IMS) are transferred via the dinuclear copper A center (CU(A)) of subunit 2 and heme A of subunit 1 to the active site in subunit 1, a binuclear center (BNC) formed by heme A3 and copper B (CU(B)). The BNC reduces molecular oxygen to 2 water molecules using 4 electrons from cytochrome c in the IMS and 4 protons from the mitochondrial matrix. The chain is Cytochrome c oxidase subunit 2 (COII) from Lumbricus terrestris (Common earthworm).